The primary structure comprises 564 residues: uncharacterized protein (564 aa).

Transmembrane regions (helical) follow at residues Thr-12–Leu-32, Met-97–Leu-119, Ala-139–Trp-161, Phe-188–Ile-208, Trp-213–Tyr-233, Met-277–Phe-297, Asn-306–Phe-326, and Phe-348–Trp-368.

The protein localises to the cell membrane. This is an uncharacterized protein from Bacillus subtilis (strain 168).